Consider the following 228-residue polypeptide: Endonuclease V (228 aa).

Residues Asp-43 and Asp-109 each contribute to the Mg(2+) site.

This sequence belongs to the endonuclease V family. Mg(2+) serves as cofactor.

The protein resides in the cytoplasm. The catalysed reaction is Endonucleolytic cleavage at apurinic or apyrimidinic sites to products with a 5'-phosphate.. In terms of biological role, DNA repair enzyme involved in the repair of deaminated bases. Selectively cleaves double-stranded DNA at the second phosphodiester bond 3' to a deoxyinosine leaving behind the intact lesion on the nicked DNA. The polypeptide is Endonuclease V (Dictyoglomus thermophilum (strain ATCC 35947 / DSM 3960 / H-6-12)).